The sequence spans 504 residues: Maturase K (504 aa).

Belongs to the intron maturase 2 family. MatK subfamily.

It localises to the plastid. It is found in the chloroplast. Usually encoded in the trnK tRNA gene intron. Probably assists in splicing its own and other chloroplast group II introns. The protein is Maturase K of Adansonia digitata (Baobab tree).